An 84-amino-acid chain; its full sequence is Large ribosomal subunit protein bL27 (84 aa).

This sequence belongs to the bacterial ribosomal protein bL27 family.

This Campylobacter jejuni subsp. jejuni serotype O:6 (strain 81116 / NCTC 11828) protein is Large ribosomal subunit protein bL27.